The following is a 285-amino-acid chain: Probable endonuclease 4 (285 aa).

Zn(2+) is bound by residues H69, H109, E145, D179, H182, H216, D229, H231, and E261.

Belongs to the AP endonuclease 2 family. Zn(2+) is required as a cofactor.

It catalyses the reaction Endonucleolytic cleavage to 5'-phosphooligonucleotide end-products.. Its function is as follows. Endonuclease IV plays a role in DNA repair. It cleaves phosphodiester bonds at apurinic or apyrimidinic (AP) sites, generating a 3'-hydroxyl group and a 5'-terminal sugar phosphate. This chain is Probable endonuclease 4, found in Escherichia coli O1:K1 / APEC.